We begin with the raw amino-acid sequence, 340 residues long: tRNA N6-adenosine threonylcarbamoyltransferase (340 aa).

Residues His114 and His118 each coordinate Fe cation. Residues 140–144 (TISGG), Asp173, Gly186, Asp190, and Asn281 contribute to the substrate site. Asp309 lines the Fe cation pocket.

The protein belongs to the KAE1 / TsaD family. Fe(2+) is required as a cofactor.

Its subcellular location is the cytoplasm. The enzyme catalyses L-threonylcarbamoyladenylate + adenosine(37) in tRNA = N(6)-L-threonylcarbamoyladenosine(37) in tRNA + AMP + H(+). Its function is as follows. Required for the formation of a threonylcarbamoyl group on adenosine at position 37 (t(6)A37) in tRNAs that read codons beginning with adenine. Is involved in the transfer of the threonylcarbamoyl moiety of threonylcarbamoyl-AMP (TC-AMP) to the N6 group of A37, together with TsaE and TsaB. TsaD likely plays a direct catalytic role in this reaction. This is tRNA N6-adenosine threonylcarbamoyltransferase from Christiangramia forsetii (strain DSM 17595 / CGMCC 1.15422 / KT0803) (Gramella forsetii).